The primary structure comprises 357 residues: Glucose-6-phosphatase catalytic subunit 1 (357 aa).

The Lumenal portion of the chain corresponds to 1 to 28 (MEERMNVLHDFGIQSTRYLQVNYEDSQD). The chain crosses the membrane as a helical span at residues 29–49 (WFVLVSVIADLRNAFYVLFPI). Residues 50 to 60 (WFHIQETVGIN) are Cytoplasmic-facing. Residues 61 to 81 (LLWVAVVGDWFNLVFKWILFG) form a helical membrane-spanning segment. Residues 82–117 (QRPYWWVLDTDYYSNSSVPLIKQFPVTCETGPGSPS) lie on the Lumenal side of the membrane. Arg-83 serves as a coordination point for substrate. Residue Asn-96 is glycosylated (N-linked (GlcNAc...) asparagine). Residues 118-138 (GHAMGTAGVYYVMVTSTLAIF) form a helical membrane-spanning segment. The Proton donor role is filled by His-119. Over 139–147 (RGKKKSTYG) the chain is Cytoplasmic. A helical membrane pass occupies residues 148-168 (FRCLNVVLWLGYWAVQLNVCL). Residues 169-170 (SR) are Lumenal-facing. Arg-170 is a substrate binding site. A helical membrane pass occupies residues 171–191 (IYLAAHFPHQVVAGVLSGIAV). Residue His-176 is the Nucleophile of the active site. Over 192–211 (AETFSHIRGIYNASLQRYCL) the chain is Cytoplasmic. A helical transmembrane segment spans residues 212–232 (ITFFLFGFALGFYLLLKGLGV). Residues 233–254 (DLLWTLEKAKRWCERPEWVHLD) lie on the Lumenal side of the membrane. Residues 255–275 (TTPFASLFKNLGTLLGLGLAL) form a helical membrane-spanning segment. Residues 276 to 291 (NSSMYRKSCKGELRKS) lie on the Cytoplasmic side of the membrane. The helical transmembrane segment at 292–312 (LPFRLACIVASLGLLHLFDSL) threads the bilayer. Over 313–320 (KPPSQIES) the chain is Lumenal. The chain crosses the membrane as a helical span at residues 321-341 (IFYILSFCKSATVPFASVSLI). At 342 to 357 (PYCLARLLGQTHKKSL) the chain is on the cytoplasmic side. The Prevents secretion from ER signature appears at 354-357 (KKSL).

This sequence belongs to the glucose-6-phosphatase family.

The protein localises to the endoplasmic reticulum membrane. The enzyme catalyses D-glucose 6-phosphate + H2O = D-glucose + phosphate. The protein operates within carbohydrate biosynthesis; gluconeogenesis. Hydrolyzes glucose-6-phosphate to glucose in the endoplasmic reticulum. Forms with the glucose-6-phosphate transporter (SLC37A4/G6PT) the complex responsible for glucose production in the terminal step of glycogenolysis and gluconeogenesis. Hence, it is the key enzyme in homeostatic regulation of blood glucose levels. In Rattus norvegicus (Rat), this protein is Glucose-6-phosphatase catalytic subunit 1 (G6pc1).